The primary structure comprises 248 residues: Chitin deacetylase (248 aa).

Residues 1-26 (MHFSTLFGAAATAALAGSTNASPLAR) form the signal peptide. Cystine bridges form between Cys-38–Cys-237 and Cys-148–Cys-152. The 191-residue stretch at 42-232 (GLVALTYDDG…TLKSKGYRAV (191 aa)) folds into the NodB homology domain. Asp-49 functions as the Proton acceptor in the catalytic mechanism. Asp-49 lines the acetate pocket. Positions 50, 104, and 108 each coordinate Co(2+). Tyr-145 contributes to the acetate binding site. His-206 (proton donor) is an active-site residue.

The protein belongs to the polysaccharide deacetylase family. In terms of assembly, monomer. Co(2+) is required as a cofactor. N-glycosylated.

The protein resides in the secreted. The enzyme catalyses [(1-&gt;4)-N-acetyl-beta-D-glucosaminyl](n) + n H2O = chitosan + n acetate. Its function is as follows. Hydrolyzes the N-acetamido groups of N-acetyl-D-glucosamine polymers in chitin to form chitosan and acetate. May play a role in evasion of the host immune response; plant chitinases liberate chitin molecules from the fungal cell wall which act as elicitors of the plant immune response, deacetylation of the liberated chitin neutralizes elicitor activity. The polypeptide is Chitin deacetylase (Colletotrichum lindemuthianum (Bean anthracnose fungus)).